The following is a 256-amino-acid chain: Zinc metalloprotease (256 aa).

His74 (proton donor) is an active-site residue.

This sequence belongs to the peptidase M4 family. Requires Zn(2+) as cofactor.

The protein localises to the secreted. May play a role in ulcer formation. Proteolytic digestion of gastric mucus has been suggested as an important mechanism by which its pathogenicity is at least partly exerted. The protein is Zinc metalloprotease (hap) of Helicobacter pylori (Campylobacter pylori).